A 33-amino-acid chain; its full sequence is Dermonecrotic toxin LbSicTox-alphaIB1b (33 aa).

The active site involves His11. The Mg(2+) site is built by Glu31 and Asp33.

Belongs to the arthropod phospholipase D family. Class II subfamily. Requires Mg(2+) as cofactor. Post-translationally, contains 2 disulfide bonds. Expressed by the venom gland.

The protein resides in the secreted. It catalyses the reaction an N-(acyl)-sphingosylphosphocholine = an N-(acyl)-sphingosyl-1,3-cyclic phosphate + choline. It carries out the reaction an N-(acyl)-sphingosylphosphoethanolamine = an N-(acyl)-sphingosyl-1,3-cyclic phosphate + ethanolamine. The enzyme catalyses a 1-acyl-sn-glycero-3-phosphocholine = a 1-acyl-sn-glycero-2,3-cyclic phosphate + choline. The catalysed reaction is a 1-acyl-sn-glycero-3-phosphoethanolamine = a 1-acyl-sn-glycero-2,3-cyclic phosphate + ethanolamine. Its function is as follows. Dermonecrotic toxins cleave the phosphodiester linkage between the phosphate and headgroup of certain phospholipids (sphingolipid and lysolipid substrates), forming an alcohol (often choline) and a cyclic phosphate. This toxin acts on sphingomyelin (SM) with high activity (9.5 U/mg). It may also act on ceramide phosphoethanolamine (CPE), lysophosphatidylcholine (LPC) and lysophosphatidylethanolamine (LPE), but not on lysophosphatidylserine (LPS), and lysophosphatidylglycerol (LPG). It acts by transphosphatidylation, releasing exclusively cyclic phosphate products as second products. Induces dermonecrosis, hemolysis, increased vascular permeability, edema, inflammatory response, and platelet aggregation. This chain is Dermonecrotic toxin LbSicTox-alphaIB1b, found in Loxosceles boneti (North American fiddleback spider).